The chain runs to 470 residues: Cysteine--tRNA ligase (470 aa).

Zn(2+) is bound at residue Cys28. Positions 30 to 40 (PTVYNYIHIGN) match the 'HIGH' region motif. 3 residues coordinate Zn(2+): Cys212, His237, and Glu241. Positions 271–275 (KMSKS) match the 'KMSKS' region motif. ATP is bound at residue Lys274.

It belongs to the class-I aminoacyl-tRNA synthetase family. As to quaternary structure, monomer. Requires Zn(2+) as cofactor.

It is found in the cytoplasm. The catalysed reaction is tRNA(Cys) + L-cysteine + ATP = L-cysteinyl-tRNA(Cys) + AMP + diphosphate. This is Cysteine--tRNA ligase from Pediococcus pentosaceus (strain ATCC 25745 / CCUG 21536 / LMG 10740 / 183-1w).